The following is a 777-amino-acid chain: Intraflagellar transport protein 80 homolog (777 aa).

7 WD repeats span residues lysine 12–isoleucine 50, alanine 104–leucine 143, glutamine 145–lysine 185, alanine 186–serine 225, proline 227–glutamate 265, proline 267–lysine 306, and lysine 504–arginine 542. The segment at threonine 758–proline 777 is disordered. The span at serine 765–proline 777 shows a compositional bias: polar residues.

In terms of assembly, component of the IFT complex B, at least composed of IFT20, IFT22, IFT25, IFT27, IFT46, IFT52, TRAF3IP1/IFT54, IFT57, IFT74, IFT80, IFT81, and IFT88. Interacts with IFT88. Interacts with IFT57 and IFT70B.

It localises to the cytoplasm. Its subcellular location is the cytoskeleton. It is found in the cilium basal body. The protein resides in the cilium axoneme. Its function is as follows. Component of the intraflagellar transport (IFT) complex B, which is essential for the development and maintenance of motile and sensory cilia. The chain is Intraflagellar transport protein 80 homolog (Ift80) from Rattus norvegicus (Rat).